Consider the following 75-residue polypeptide: MSVFDKVKSIVVDQLGVEEDEITLETTFADLNADSLDIVELIMALEEEFDLDIPDEDAEKIRNVGDAVNYIKENQ.

Residues 1–75 (MSVFDKVKSI…DAVNYIKENQ (75 aa)) form the Carrier domain. Ser-35 bears the O-(pantetheine 4'-phosphoryl)serine mark.

The protein belongs to the acyl carrier protein (ACP) family. Post-translationally, 4'-phosphopantetheine is transferred from CoA to a specific serine of apo-ACP by AcpS. This modification is essential for activity because fatty acids are bound in thioester linkage to the sulfhydryl of the prosthetic group.

The protein resides in the cytoplasm. It participates in lipid metabolism; fatty acid biosynthesis. Carrier of the growing fatty acid chain in fatty acid biosynthesis. This is Acyl carrier protein from Desulfitobacterium hafniense (strain Y51).